We begin with the raw amino-acid sequence, 521 residues long: Glucose-6-phosphate isomerase (521 aa).

Glutamate 327 (proton donor) is an active-site residue. Residues histidine 358 and lysine 486 contribute to the active site.

This sequence belongs to the GPI family.

It localises to the cytoplasm. It carries out the reaction alpha-D-glucose 6-phosphate = beta-D-fructose 6-phosphate. Its pathway is carbohydrate biosynthesis; gluconeogenesis. It participates in carbohydrate degradation; glycolysis; D-glyceraldehyde 3-phosphate and glycerone phosphate from D-glucose: step 2/4. In terms of biological role, catalyzes the reversible isomerization of glucose-6-phosphate to fructose-6-phosphate. The chain is Glucose-6-phosphate isomerase from Bordetella bronchiseptica (strain ATCC BAA-588 / NCTC 13252 / RB50) (Alcaligenes bronchisepticus).